We begin with the raw amino-acid sequence, 247 residues long: Serine protease 1 (247 aa).

A signal peptide spans 1 to 15 (MNPLLILTFVAAALA). Residues 16-23 (APFDDDDK) constitute a propeptide, activation peptide. The region spanning 24–244 (IVGGYNCEEN…YVKWIKNTIA (221 aa)) is the Peptidase S1 domain. 5 cysteine pairs are disulfide-bonded: C30-C160, C48-C64, C139-C206, C171-C185, and C196-C220. H63 acts as the Charge relay system in catalysis. Residues E75, N77, V80, and E85 each contribute to the Ca(2+) site. D107 (charge relay system) is an active-site residue. Y154 carries the post-translational modification Sulfotyrosine. Catalysis depends on S200, which acts as the Charge relay system.

This sequence belongs to the peptidase S1 family. Interacts with SERPINA1. Ca(2+) serves as cofactor. In terms of processing, occurs in a single-chain form and a two-chain form, produced by proteolytic cleavage after Arg-122. Sulfation at Tyr-154 increases selectivity towards basic versus apolar residues at the P2' position of inhibitors that bind in a substrate-like fashion. Although the increase in selectivity is relatively small, it may facilitate digestion of a broader range of dietary proteins.

It is found in the secreted. Its subcellular location is the extracellular space. It catalyses the reaction Preferential cleavage: Arg-|-Xaa, Lys-|-Xaa.. In terms of biological role, has activity against the synthetic substrates Boc-Phe-Ser-Arg-Mec, Boc-Leu-Thr-Arg-Mec, Boc-Gln-Ala-Arg-Mec and Boc-Val-Pro-Arg-Mec. The single-chain form is more active than the two-chain form against all of these substrates. The protein is Serine protease 1 of Homo sapiens (Human).